The chain runs to 160 residues: Cytochrome b6-f complex subunit 4 (160 aa).

Helical transmembrane passes span 36–56, 95–115, and 131–151; these read LLYI…GLGV, LLGV…PFIE, and LVFL…TMPI.

It belongs to the cytochrome b family. PetD subfamily. As to quaternary structure, the 4 large subunits of the cytochrome b6-f complex are cytochrome b6, subunit IV (17 kDa polypeptide, petD), cytochrome f and the Rieske protein, while the 4 small subunits are petG, petL, petM and petN. The complex functions as a dimer.

Its subcellular location is the plastid. The protein resides in the chloroplast thylakoid membrane. Its function is as follows. Component of the cytochrome b6-f complex, which mediates electron transfer between photosystem II (PSII) and photosystem I (PSI), cyclic electron flow around PSI, and state transitions. This is Cytochrome b6-f complex subunit 4 from Emiliania huxleyi (Coccolithophore).